Consider the following 265-residue polypeptide: 4-hydroxy-tetrahydrodipicolinate reductase (265 aa).

NAD(+) contacts are provided by residues 7–12 (GASGRM) and D33. R34 serves as a coordination point for NADP(+). NAD(+) contacts are provided by residues 96–98 (GTT) and 120–123 (AANM). H153 serves as the catalytic Proton donor/acceptor. H154 serves as a coordination point for (S)-2,3,4,5-tetrahydrodipicolinate. K157 (proton donor) is an active-site residue. A (S)-2,3,4,5-tetrahydrodipicolinate-binding site is contributed by 163–164 (GT).

The protein belongs to the DapB family.

It localises to the cytoplasm. The catalysed reaction is (S)-2,3,4,5-tetrahydrodipicolinate + NAD(+) + H2O = (2S,4S)-4-hydroxy-2,3,4,5-tetrahydrodipicolinate + NADH + H(+). It carries out the reaction (S)-2,3,4,5-tetrahydrodipicolinate + NADP(+) + H2O = (2S,4S)-4-hydroxy-2,3,4,5-tetrahydrodipicolinate + NADPH + H(+). It participates in amino-acid biosynthesis; L-lysine biosynthesis via DAP pathway; (S)-tetrahydrodipicolinate from L-aspartate: step 4/4. Functionally, catalyzes the conversion of 4-hydroxy-tetrahydrodipicolinate (HTPA) to tetrahydrodipicolinate. The chain is 4-hydroxy-tetrahydrodipicolinate reductase from Burkholderia ambifaria (strain ATCC BAA-244 / DSM 16087 / CCUG 44356 / LMG 19182 / AMMD) (Burkholderia cepacia (strain AMMD)).